We begin with the raw amino-acid sequence, 473 residues long: Glutamate--tRNA ligase (473 aa).

The 'HIGH' region signature appears at 10–20; it reads PSPTGYLHLGN. Zn(2+)-binding residues include C98, C100, C125, and H127. The 'KMSKS' region motif lies at 242–246; sequence KLSKR. ATP is bound at residue K245.

It belongs to the class-I aminoacyl-tRNA synthetase family. Glutamate--tRNA ligase type 1 subfamily. In terms of assembly, monomer. It depends on Zn(2+) as a cofactor.

It is found in the cytoplasm. The enzyme catalyses tRNA(Glu) + L-glutamate + ATP = L-glutamyl-tRNA(Glu) + AMP + diphosphate. Catalyzes the attachment of glutamate to tRNA(Glu) in a two-step reaction: glutamate is first activated by ATP to form Glu-AMP and then transferred to the acceptor end of tRNA(Glu). The polypeptide is Glutamate--tRNA ligase (Aquifex aeolicus (strain VF5)).